We begin with the raw amino-acid sequence, 109 residues long: Cell division protein ZapA (109 aa).

The stretch at 22–99 (EQQDALNMAA…IEQALLEQGR (78 aa)) forms a coiled coil.

The protein belongs to the ZapA family. Type 1 subfamily. As to quaternary structure, homodimer. Interacts with FtsZ.

It is found in the cytoplasm. Functionally, activator of cell division through the inhibition of FtsZ GTPase activity, therefore promoting FtsZ assembly into bundles of protofilaments necessary for the formation of the division Z ring. It is recruited early at mid-cell but it is not essential for cell division. The sequence is that of Cell division protein ZapA from Yersinia enterocolitica serotype O:8 / biotype 1B (strain NCTC 13174 / 8081).